Consider the following 327-residue polypeptide: Biotin synthase (327 aa).

A Radical SAM core domain is found at 49-273 (FNKDKIDLCS…ICIARIALPD (225 aa)). Positions 67, 71, and 74 each coordinate [4Fe-4S] cluster. Positions 110, 142, 201, and 277 each coordinate [2Fe-2S] cluster.

Belongs to the radical SAM superfamily. Biotin synthase family. In terms of assembly, homodimer. Requires [4Fe-4S] cluster as cofactor. [2Fe-2S] cluster is required as a cofactor.

It catalyses the reaction (4R,5S)-dethiobiotin + (sulfur carrier)-SH + 2 reduced [2Fe-2S]-[ferredoxin] + 2 S-adenosyl-L-methionine = (sulfur carrier)-H + biotin + 2 5'-deoxyadenosine + 2 L-methionine + 2 oxidized [2Fe-2S]-[ferredoxin]. The protein operates within cofactor biosynthesis; biotin biosynthesis; biotin from 7,8-diaminononanoate: step 2/2. Catalyzes the conversion of dethiobiotin (DTB) to biotin by the insertion of a sulfur atom into dethiobiotin via a radical-based mechanism. In Methanococcus maripaludis (strain C6 / ATCC BAA-1332), this protein is Biotin synthase.